The primary structure comprises 279 residues: MTENIISVDHLTYQYDENQAPALTDVSFTVHAGEWLAIVGHNGSGKSTLAKSLDGLLPFTQGSVTVGGITLTPETVWQVREQIGMIFQNPDNQFVGATVEDDVAFGLENRQISRDEMVPRVQAALAQVGMTSFAQREPSSLSGGQKQRVALAGIVAIAPKILILDEATSMLDPQGRIEMLAIVRQLRQQQNLTVISITHDIDEAASADRVLVIDDGRLVDEAVPSQIFERGTQLVEMGLDLPFTEKLKAALRQRGITPPTTYQTAAEMEEWLWQSLSNT.

Residues 6 to 240 (ISVDHLTYQY…GTQLVEMGLD (235 aa)) form the ABC transporter domain. 40–47 (GHNGSGKS) is an ATP binding site.

The protein belongs to the ABC transporter superfamily. Energy-coupling factor EcfA family. Forms a stable energy-coupling factor (ECF) transporter complex composed of 2 membrane-embedded substrate-binding proteins (S component), 2 ATP-binding proteins (A component) and 2 transmembrane proteins (T component).

It is found in the cell membrane. ATP-binding (A) component of a common energy-coupling factor (ECF) ABC-transporter complex. Unlike classic ABC transporters this ECF transporter provides the energy necessary to transport a number of different substrates. The chain is Energy-coupling factor transporter ATP-binding protein EcfA1 from Levilactobacillus brevis (strain ATCC 367 / BCRC 12310 / CIP 105137 / JCM 1170 / LMG 11437 / NCIMB 947 / NCTC 947) (Lactobacillus brevis).